A 108-amino-acid chain; its full sequence is ATP synthase peripheral stalk subunit F6, mitochondrial (108 aa).

Residues 1–32 (MVLQRIFRLSSVLRSAVSVHLKRNIGVTAVAF) constitute a mitochondrion transit peptide. N6-acetyllysine occurs at positions 41, 46, and 79. 3 positions are modified to N6-acetyllysine; alternate: Lys84, Lys94, and Lys99. 3 positions are modified to N6-succinyllysine; alternate: Lys84, Lys94, and Lys99. Residue Lys105 is modified to N6-acetyllysine. Ser108 carries the post-translational modification Phosphoserine.

The protein belongs to the eukaryotic ATPase subunit F6 family. As to quaternary structure, component of the ATP synthase complex composed at least of ATP5F1A/subunit alpha, ATP5F1B/subunit beta, ATP5MC1/subunit c (homooctomer), MT-ATP6/subunit a, MT-ATP8/subunit 8, ATP5ME/subunit e, ATP5MF/subunit f, ATP5MG/subunit g, ATP5MK/subunit k, ATP5MJ/subunit j, ATP5F1C/subunit gamma, ATP5F1D/subunit delta, ATP5F1E/subunit epsilon, ATP5PF/subunit F6, ATP5PB/subunit b, ATP5PD/subunit d, ATP5PO/subunit OSCP. ATP synthase complex consists of a soluble F(1) head domain (subunits alpha(3) and beta(3)) - the catalytic core - and a membrane F(0) domain - the membrane proton channel (subunits c, a, 8, e, f, g, k and j). These two domains are linked by a central stalk (subunits gamma, delta, and epsilon) rotating inside the F1 region and a stationary peripheral stalk (subunits F6, b, d, and OSCP).

It localises to the mitochondrion. It is found in the mitochondrion inner membrane. Subunit F6, of the mitochondrial membrane ATP synthase complex (F(1)F(0) ATP synthase or Complex V) that produces ATP from ADP in the presence of a proton gradient across the membrane which is generated by electron transport complexes of the respiratory chain. ATP synthase complex consist of a soluble F(1) head domain - the catalytic core - and a membrane F(1) domain - the membrane proton channel. These two domains are linked by a central stalk rotating inside the F(1) region and a stationary peripheral stalk. During catalysis, ATP synthesis in the catalytic domain of F(1) is coupled via a rotary mechanism of the central stalk subunits to proton translocation. In vivo, can only synthesize ATP although its ATP hydrolase activity can be activated artificially in vitro. Part of the complex F(0) domain. Part of the complex F(0) domain and the peripheric stalk, which acts as a stator to hold the catalytic alpha(3)beta(3) subcomplex and subunit a/ATP6 static relative to the rotary elements. The chain is ATP synthase peripheral stalk subunit F6, mitochondrial from Mus musculus (Mouse).